The sequence spans 207 residues: Small ribosomal subunit protein uS4 (207 aa).

The disordered stretch occupies residues 26–47 (AINNKNYKPGQQGNSSSISKPS). Positions 28–39 (NNKNYKPGQQGN) are enriched in polar residues. One can recognise an S4 RNA-binding domain in the interval 95 to 158 (RRLDAVVYRL…KQIPIVIGAI (64 aa)).

It belongs to the universal ribosomal protein uS4 family. Part of the 30S ribosomal subunit. Contacts protein S5. The interaction surface between S4 and S5 is involved in control of translational fidelity.

Its function is as follows. One of the primary rRNA binding proteins, it binds directly to 16S rRNA where it nucleates assembly of the body of the 30S subunit. Functionally, with S5 and S12 plays an important role in translational accuracy. In Orientia tsutsugamushi (strain Boryong) (Rickettsia tsutsugamushi), this protein is Small ribosomal subunit protein uS4.